We begin with the raw amino-acid sequence, 438 residues long: Adenylosuccinate synthetase (438 aa).

GTP-binding positions include 13-19 (GDEGKGK) and 41-43 (GHT). Aspartate 14 serves as the catalytic Proton acceptor. Mg(2+) is bound by residues aspartate 14 and glycine 41. IMP contacts are provided by residues 14-17 (DEGK), 39-42 (NAGH), threonine 130, arginine 144, glutamine 225, threonine 240, and arginine 312. Residue histidine 42 is the Proton donor of the active site. Position 308–314 (308–314 (ATTGRQR)) interacts with substrate. Residues arginine 314, 340–342 (KLD), and 422–424 (STG) each bind GTP.

The protein belongs to the adenylosuccinate synthetase family. In terms of assembly, homodimer. Mg(2+) is required as a cofactor.

It localises to the cytoplasm. It carries out the reaction IMP + L-aspartate + GTP = N(6)-(1,2-dicarboxyethyl)-AMP + GDP + phosphate + 2 H(+). The protein operates within purine metabolism; AMP biosynthesis via de novo pathway; AMP from IMP: step 1/2. In terms of biological role, plays an important role in the de novo pathway of purine nucleotide biosynthesis. Catalyzes the first committed step in the biosynthesis of AMP from IMP. This is Adenylosuccinate synthetase from Ruthia magnifica subsp. Calyptogena magnifica.